Reading from the N-terminus, the 329-residue chain is G-protein coupled bile acid receptor 1 (329 aa).

At 1 to 19 (MTSNSTREVPSPVPAGALG) the chain is on the extracellular side. Asn4 is a glycosylation site (N-linked (GlcNAc...) asparagine). Residues 20–40 (LSLALASLIVAANLLLAVGIA) form a helical membrane-spanning segment. Residues 41-52 (GDRRLRSPPAGC) are Cytoplasmic-facing. A helical transmembrane segment spans residues 53–73 (FFLSLLLAGLLTGLALPALPV). Residues 74–85 (LWSQSRRGYWSC) are Extracellular-facing. Cys85 and Cys155 are oxidised to a cystine. The helical transmembrane segment at 86-106 (LFLYLAPNFCFLSLLANLLLV) threads the bilayer. The Cytoplasmic segment spans residues 107–125 (HGERYMAVLRPLRPRGSMR). A helical membrane pass occupies residues 126 to 146 (LALLLTWAAPLLFASLPALGW). The Extracellular segment spans residues 147-165 (NHWAPGGNCSSQAVFPAPY). A glycan (N-linked (GlcNAc...) asparagine) is linked at Asn154. A helical transmembrane segment spans residues 166 to 186 (LYLEIYGLLLPAVGAAALLSV). The Cytoplasmic segment spans residues 187-230 (RVLVTAHRQLQDIRRLERAVCRGAPSALARALTWRQARAQAGAT). Residues 231-251 (LLFGLCWGPYVATLLLSVLAF) form a helical membrane-spanning segment. Over 252–261 (EQRPPLGPGT) the chain is Extracellular. The helical transmembrane segment at 262 to 282 (LLSLISLGSASAAAVPVAMGL) threads the bilayer. Topologically, residues 283-329 (GDQRYTGPWRVAAQKWLRMLRGRPQSSPGPSTAYHTSSQSSVDLDLN) are cytoplasmic. The disordered stretch occupies residues 304 to 329 (GRPQSSPGPSTAYHTSSQSSVDLDLN). Residues 306 to 329 (PQSSPGPSTAYHTSSQSSVDLDLN) show a composition bias toward polar residues.

Belongs to the G-protein coupled receptor 1 family.

The protein resides in the cell membrane. Receptor for bile acid. Bile acid-binding induces its internalization, activation of extracellular signal-regulated kinase and intracellular cAMP production. May be involved in the suppression of macrophage functions by bile acids. Involved in bile acid promoted GLP1R secretion. The chain is G-protein coupled bile acid receptor 1 (GPBAR1) from Bos taurus (Bovine).